A 131-amino-acid polypeptide reads, in one-letter code: Histone H2A.2 (131 aa).

The disordered stretch occupies residues 1 to 22 (MSGGKGKAGSSEKASTSRSAKA). At Ser2 the chain carries N-acetylserine. N6-acetyllysine is present on residues Lys5 and Lys7. N5-methylglutamine is present on Gln105. A Phosphoserine modification is found at Ser128. The [ST]-Q motif motif lies at 128-129 (SQ).

It belongs to the histone H2A family. The nucleosome is a histone octamer containing two molecules each of H2A, H2B, H3 and H4 assembled in one H3-H4 heterotetramer and two H2A-H2B heterodimers. The octamer wraps approximately 147 bp of DNA. Phosphorylated to form H2AS128ph (gamma-H2A) in response to DNA double-strand breaks (DSBs) generated by exogenous genotoxic agents and by stalled replication forks. Phosphorylation is dependent on the DNA damage checkpoint kinases MEC1/ATR and TEL1/ATM, spreads on either side of a detected DSB site and may mark the surrounding chromatin for recruitment of proteins required for DNA damage signaling and repair. Gamma-H2A is removed from the DNA prior to the strand invasion-primer extension step of the repair process and subsequently dephosphorylated. Dephosphorylation is necessary for efficient recovery from the DNA damage checkpoint. In terms of processing, acetylated by ESA1 to form H2AK4ac and H2AK7ac.

Its subcellular location is the nucleus. The protein resides in the chromosome. Its function is as follows. Core component of nucleosome which plays a central role in DNA double strand break (DSB) repair. Nucleosomes wrap and compact DNA into chromatin, limiting DNA accessibility to the cellular machineries which require DNA as a template. Histones thereby play a central role in transcription regulation, DNA repair, DNA replication and chromosomal stability. DNA accessibility is regulated via a complex set of post-translational modifications of histones, also called histone code, and nucleosome remodeling. In Debaryomyces hansenii (strain ATCC 36239 / CBS 767 / BCRC 21394 / JCM 1990 / NBRC 0083 / IGC 2968) (Yeast), this protein is Histone H2A.2 (HTA2).